Reading from the N-terminus, the 166-residue chain is Large ribosomal subunit protein uL10 (166 aa).

It belongs to the universal ribosomal protein uL10 family. In terms of assembly, part of the ribosomal stalk of the 50S ribosomal subunit. The N-terminus interacts with L11 and the large rRNA to form the base of the stalk. The C-terminus forms an elongated spine to which L12 dimers bind in a sequential fashion forming a multimeric L10(L12)X complex.

Functionally, forms part of the ribosomal stalk, playing a central role in the interaction of the ribosome with GTP-bound translation factors. In Streptococcus equi subsp. zooepidemicus (strain MGCS10565), this protein is Large ribosomal subunit protein uL10.